The following is a 363-amino-acid chain: Pyrimidine monooxygenase RutA (363 aa).

Residues 49–50 (IK), asparagine 115, glutamate 124, 140–141 (RY), and serine 190 contribute to the FMN site.

Belongs to the NtaA/SnaA/DszA monooxygenase family. RutA subfamily.

It catalyses the reaction uracil + FMNH2 + NADH + O2 = (Z)-3-ureidoacrylate + FMN + NAD(+) + H2O + H(+). It carries out the reaction thymine + FMNH2 + NADH + O2 = (Z)-2-methylureidoacrylate + FMN + NAD(+) + H2O + H(+). In terms of biological role, catalyzes the pyrimidine ring opening between N-3 and C-4 by an unusual flavin hydroperoxide-catalyzed mechanism, adding oxygen atoms in the process to yield ureidoacrylate peracid, that immediately reacts with FMN forming ureidoacrylate and FMN-N(5)-oxide. The FMN-N(5)-oxide reacts spontaneously with NADH to produce FMN. Requires the flavin reductase RutF to regenerate FMN in vivo. The protein is Pyrimidine monooxygenase RutA (rutA) of Agrobacterium fabrum (strain C58 / ATCC 33970) (Agrobacterium tumefaciens (strain C58)).